The following is a 162-amino-acid chain: Tegument protein BLRF2 (162 aa).

Residues 12–43 (VKAVDMSMEDMAARLARLESENKALKQQVLRG) are a coiled coil. A disordered region spans residues 121–162 (GAKGQPSPGEGTRLRESNDPNATRRARSRSRGREAKKVQISD). Residues 151–162 (RGREAKKVQISD) show a composition bias toward basic and acidic residues.

Belongs to the herpesviridae BLRF2 family. In terms of assembly, homooligomer; homooligomerizes and binds double-stranded DNA (dsDNA) cooperatively. Interacts with host CGAS.

The protein localises to the virion tegument. It is found in the host cytoplasm. In terms of biological role, plays a role in the inhibition of host innate immune system by targeting the CGAS enzymatic activity which is the principal cytosolic DNA sensor that detects invading viral DNA. Acts by inhibiting CGAS-DNA phase separation: directly binds double-stranded DNA (dsDNA) in a length dependent but sequence independent manner and is able to form DNA-induced phase separation in infected cells. DNA phase separation of ORF52 mediates disruption of liquid-like droplets in which CGAS is activated, thereby preventing CGAS activity. This is Tegument protein BLRF2 from Epstein-Barr virus (strain GD1) (HHV-4).